Consider the following 79-residue polypeptide: uncharacterized protein (79 aa).

It belongs to the asfivirus D79L family.

This is an uncharacterized protein from Ornithodoros (relapsing fever ticks).